The sequence spans 93 residues: Putative septation protein SpoVG (93 aa).

This sequence belongs to the SpoVG family.

Its function is as follows. Could be involved in septation. This is Putative septation protein SpoVG from Treponema denticola (strain ATCC 35405 / DSM 14222 / CIP 103919 / JCM 8153 / KCTC 15104).